A 514-amino-acid chain; its full sequence is Peptide chain release factor 3 (514 aa).

The tr-type G domain maps to 8–268; the sequence is KKRRTFAIIS…IFLKFAPEPH (261 aa). GTP contacts are provided by residues 17-24, 85-89, and 139-142; these read SHPDAGKT, DTPGH, and NKLD.

This sequence belongs to the TRAFAC class translation factor GTPase superfamily. Classic translation factor GTPase family. PrfC subfamily.

The protein localises to the cytoplasm. In terms of biological role, increases the formation of ribosomal termination complexes and stimulates activities of RF-1 and RF-2. It binds guanine nucleotides and has strong preference for UGA stop codons. It may interact directly with the ribosome. The stimulation of RF-1 and RF-2 is significantly reduced by GTP and GDP, but not by GMP. The sequence is that of Peptide chain release factor 3 from Streptococcus pneumoniae (strain 70585).